Reading from the N-terminus, the 901-residue chain is HTH-type transcriptional regulator MalT (901 aa).

39–46 (SPAGYGKT) provides a ligand contact to ATP. The region spanning 829–894 (ELIRTSPLTQ…AAVQHAQKLL (66 aa)) is the HTH luxR-type domain. A DNA-binding region (H-T-H motif) is located at residues 853–872 (NEQIAGELEVAATTIKTHIR).

This sequence belongs to the MalT family. As to quaternary structure, monomer in solution. Oligomerizes to an active state in the presence of the positive effectors ATP and maltotriose.

Its activity is regulated as follows. Activated by ATP and maltotriose, which are both required for DNA binding. Functionally, positively regulates the transcription of the maltose regulon whose gene products are responsible for uptake and catabolism of malto-oligosaccharides. Specifically binds to the promoter region of its target genes, recognizing a short DNA motif called the MalT box. The sequence is that of HTH-type transcriptional regulator MalT from Escherichia coli O127:H6 (strain E2348/69 / EPEC).